Here is a 361-residue protein sequence, read N- to C-terminus: MHHTTVALLFGGRSLEHEISVISARAVAANIDRDRYRVLAVYITRDGGWYAGGVAEQILKLDIADLIRTTSLEATAATLREMVAASAEPPFNFDFRGIDVAFPVLHGSYGEDGRVQGLLETLQVPCTGCGVLASALTMDKALTKLAAADAGLAVAVSVTVMSHAYRRDPEATHRLAVASLSFPMFVKPVSLGSSVGITKVNSESELAEAITHACSLDSKVLIEQAVKGREVEVAVIGNDTLEASPCGEIEPGSEFYDYEDKYIHDTAKLFIPARIPGDLQEKVREAALCAYRALGCRGMSRVDFFVDETTGSIVFNEINTIPGFTPVSMYPRLMAAAGTGFMELTDRLIRLAMEPEAGASA.

Residues 144 to 350 (KLAAADAGLA…FMELTDRLIR (207 aa)) form the ATP-grasp domain. An ATP-binding site is contributed by 177–232 (VASLSFPMFVKPVSLGSSVGITKVNSESELAEAITHACSLDSKVLIEQAVKGREVE). Mg(2+) is bound by residues aspartate 303, glutamate 317, and asparagine 319.

Belongs to the D-alanine--D-alanine ligase family. It depends on Mg(2+) as a cofactor. Mn(2+) is required as a cofactor.

It localises to the cytoplasm. The enzyme catalyses 2 D-alanine + ATP = D-alanyl-D-alanine + ADP + phosphate + H(+). The protein operates within cell wall biogenesis; peptidoglycan biosynthesis. Functionally, cell wall formation. The protein is D-alanine--D-alanine ligase of Chlorobium luteolum (strain DSM 273 / BCRC 81028 / 2530) (Pelodictyon luteolum).